Consider the following 726-residue polypeptide: Peroxisomal fatty acid beta-oxidation multifunctional protein (726 aa).

This sequence in the N-terminal section; belongs to the enoyl-CoA hydratase/isomerase family. In the central section; belongs to the 3-hydroxyacyl-CoA dehydrogenase family. Monomer.

It is found in the peroxisome. The protein resides in the cytoplasm. The protein localises to the cytoskeleton. The enzyme catalyses a (3S)-3-hydroxyacyl-CoA = a (2E)-enoyl-CoA + H2O. It catalyses the reaction a 4-saturated-(3S)-3-hydroxyacyl-CoA = a (3E)-enoyl-CoA + H2O. It carries out the reaction a (3Z)-enoyl-CoA = a 4-saturated (2E)-enoyl-CoA. The catalysed reaction is a (3E)-enoyl-CoA = a 4-saturated (2E)-enoyl-CoA. The enzyme catalyses (3S)-3-hydroxybutanoyl-CoA = (3R)-3-hydroxybutanoyl-CoA. It catalyses the reaction a (3S)-3-hydroxyacyl-CoA + NAD(+) = a 3-oxoacyl-CoA + NADH + H(+). Its pathway is lipid metabolism; fatty acid beta-oxidation. Multifunctional enzyme involved in fatty acid beta-oxidation. Also binds to RNA and microtubules. Possible role in subcellular mRNA localization and RNA-cytoskeleton interactions. The protein is Peroxisomal fatty acid beta-oxidation multifunctional protein (MFP) of Oryza sativa subsp. japonica (Rice).